Consider the following 279-residue polypeptide: MIEITLLGTGSPIPDPDRAGPSTLVRAGGQVFLVDCGRGVLQRAAAVGVGAAGLSAVLLTHLHSDHIAELGDVLITSWVTNFAADPAPLQVIGPPGTAETVDAMLKAFGRDIGYRIAHHADLNAPPPIEVHEYTDGTVWDRDGVAIRVAPTDHRPVAPTIGFRVEFDGASAVLAGDTVPCPSLDELAAGAGALVHTVIRKDIITNFPQQRVKDICDYHSSVQEAAATAARAGVGTLVMTHYVPAIIAGQEDQWRALAATEFGGRIELGNDLHRVEVHAR.

Zn(2+) contacts are provided by His61, His63, Asp65, His66, His153, Asp176, and His240. Asp65 functions as the Proton acceptor in the catalytic mechanism.

Belongs to the RNase Z family. In terms of assembly, homodimer. The cofactor is Zn(2+).

The enzyme catalyses Endonucleolytic cleavage of RNA, removing extra 3' nucleotides from tRNA precursor, generating 3' termini of tRNAs. A 3'-hydroxy group is left at the tRNA terminus and a 5'-phosphoryl group is left at the trailer molecule.. Zinc phosphodiesterase, which displays some tRNA 3'-processing endonuclease activity. Probably involved in tRNA maturation, by removing a 3'-trailer from precursor tRNA. This is Ribonuclease Z from Mycobacterium marinum (strain ATCC BAA-535 / M).